Here is a 332-residue protein sequence, read N- to C-terminus: Probable allantoicase (332 aa).

It belongs to the allantoicase family.

The catalysed reaction is allantoate + H2O = (S)-ureidoglycolate + urea. It participates in nitrogen metabolism; (S)-allantoin degradation; (S)-ureidoglycolate from allantoate (aminidohydrolase route): step 1/1. In Pseudomonas aeruginosa (strain UCBPP-PA14), this protein is Probable allantoicase.